A 418-amino-acid chain; its full sequence is cAMP-dependent protein kinase type II-beta regulatory subunit (418 aa).

The segment at 2 to 153 (SIEIPAGLTE…RLQEACKDIL (152 aa)) is dimerization and phosphorylation. The segment covering 48-57 (TARFGHEGRT) has biased composition (basic and acidic residues). Residues 48–96 (TARFGHEGRTWGDLGAAAGGGTPSKGVNFAEEPMQSDSEDGEEEEAAPA) form a disordered region. At Thr69 the chain carries Phosphothreonine. Residues Ser83, Ser85, and Ser114 each carry the phosphoserine modification. The segment covering 84 to 94 (DSEDGEEEEAA) has biased composition (acidic residues). 3',5'-cyclic AMP contacts are provided by residues 154 to 275 (LFKN…ESLP), Glu223, Arg232, 276 to 418 (FLKS…EPTA), Glu352, and Arg361.

The protein belongs to the cAMP-dependent kinase regulatory chain family. The inactive form of the enzyme is composed of two regulatory chains and two catalytic chains. Activation by cAMP produces two active catalytic monomers and a regulatory dimer that binds four cAMP molecules. Interacts with PRKACA and PRKACB. Interacts with the phosphorylated form of PJA2. Forms a complex composed of PRKAR2B, GSK3B and GSKIP through GSKIP interaction; facilitates PKA-induced phosphorylation and regulates GSK3B activity. Post-translationally, phosphorylated by the activated catalytic chain. As to expression, four types of regulatory chains are found: I-alpha, I-beta, II-alpha, and II-beta. Their expression varies among tissues and is in some cases constitutive and in others inducible.

The protein localises to the cytoplasm. Its subcellular location is the cell membrane. Regulatory subunit of the cAMP-dependent protein kinases involved in cAMP signaling in cells. Type II regulatory chains mediate membrane association by binding to anchoring proteins, including the MAP2 kinase. This chain is cAMP-dependent protein kinase type II-beta regulatory subunit (PRKAR2B), found in Homo sapiens (Human).